We begin with the raw amino-acid sequence, 466 residues long: Dihydrolipoyl dehydrogenase (466 aa).

Residues 34–42, K51, and G114 each bind FAD; that span reads ERVHLGGIC. C42 and C47 are oxidised to a cystine. NAD(+)-binding positions include 180–184, E203, and 269–272; these read GSGAI and AIGV. D311 and A319 together coordinate FAD. The active-site Proton acceptor is the H445.

It belongs to the class-I pyridine nucleotide-disulfide oxidoreductase family. Homodimer. FAD is required as a cofactor.

It is found in the cytoplasm. The catalysed reaction is N(6)-[(R)-dihydrolipoyl]-L-lysyl-[protein] + NAD(+) = N(6)-[(R)-lipoyl]-L-lysyl-[protein] + NADH + H(+). Functionally, lipoamide dehydrogenase is a component of the alpha-ketoacid dehydrogenase complexes. The protein is Dihydrolipoyl dehydrogenase (lpd) of Zymomonas mobilis subsp. mobilis (strain ATCC 31821 / ZM4 / CP4).